The following is a 417-amino-acid chain: Histidine--tRNA ligase (417 aa).

The protein belongs to the class-II aminoacyl-tRNA synthetase family. As to quaternary structure, homodimer.

The protein resides in the cytoplasm. The catalysed reaction is tRNA(His) + L-histidine + ATP = L-histidyl-tRNA(His) + AMP + diphosphate + H(+). The polypeptide is Histidine--tRNA ligase (Nitratidesulfovibrio vulgaris (strain ATCC 29579 / DSM 644 / CCUG 34227 / NCIMB 8303 / VKM B-1760 / Hildenborough) (Desulfovibrio vulgaris)).